A 180-amino-acid polypeptide reads, in one-letter code: ATP-dependent protease subunit HslV (180 aa).

The active site involves threonine 5. 3 residues coordinate Na(+): glycine 165, cysteine 168, and threonine 171.

Belongs to the peptidase T1B family. HslV subfamily. In terms of assembly, a double ring-shaped homohexamer of HslV is capped on each side by a ring-shaped HslU homohexamer. The assembly of the HslU/HslV complex is dependent on binding of ATP.

It is found in the cytoplasm. It catalyses the reaction ATP-dependent cleavage of peptide bonds with broad specificity.. With respect to regulation, allosterically activated by HslU binding. Functionally, protease subunit of a proteasome-like degradation complex believed to be a general protein degrading machinery. In Helicobacter pylori (strain G27), this protein is ATP-dependent protease subunit HslV.